A 302-amino-acid chain; its full sequence is Calpain-1 catalytic subunit (302 aa).

The segment at Arg1–Asp114 is domain III. The segment at Gln115 to Glu130 is linker. The interval Ile131 to Phe301 is domain IV. EF-hand domains lie at Phe173–Arg206, Asn203–Lys238, and Val268–Ala302. The Ca(2+) site is built by Asp186, Asp188, Asn190, Lys192, Glu197, Asp216, Asp218, Ser220, Ser222, and Glu227.

It belongs to the peptidase C2 family. In terms of assembly, forms a heterodimer with a small (regulatory) subunit CAPNS1. Requires Ca(2+) as cofactor. In terms of processing, the N-terminus is blocked. Undergoes calcium-induced successive autoproteolytic cleavages that generate a membrane-bound 78 kDa active form and an intracellular 75 kDa active form. Calpastatin reduces with high efficiency the transition from 78 kDa to 75 kDa calpain forms. Ubiquitous.

Its subcellular location is the cytoplasm. The protein resides in the cell membrane. The enzyme catalyses Broad endopeptidase specificity.. Activated by micromolar concentrations of calcium and inhibited by calpastatin. Its function is as follows. Calcium-regulated non-lysosomal thiol-protease which catalyzes limited proteolysis of substrates involved in cytoskeletal remodeling and signal transduction. Proteolytically cleaves CTBP1. Cleaves and activates caspase-7 (CASP7). The chain is Calpain-1 catalytic subunit from Oryctolagus cuniculus (Rabbit).